Reading from the N-terminus, the 172-residue chain is Lectin (172 aa).

The N-terminal stretch at 1 to 20 (MVWCLADLRAYVLVLLVISG) is a signal peptide. Residues 36–172 (DCTPGWDCHF…ICKYTTPCRY (137 aa)) form the C-type lectin domain. 2 cysteine pairs are disulfide-bonded: Cys65-Cys164 and Cys140-Cys156. The N-linked (GlcNAc...) asparagine glycan is linked to Asn93.

Heterodimer. As to expression, anterior part of oviduct.

Its subcellular location is the secreted. Functionally, may be involved in protection of eggs and embryos against microorganisms. Calcium-dependent lectin with specificity to D-glucose and D-glucosamine. Can agglutinate microorganisms in vivo. The chain is Lectin (LEC) from Pleurodeles waltl (Iberian ribbed newt).